The primary structure comprises 309 residues: Ferrochelatase (309 aa).

Residues His187 and Glu265 each contribute to the Fe cation site.

Belongs to the ferrochelatase family.

The protein resides in the cytoplasm. The enzyme catalyses heme b + 2 H(+) = protoporphyrin IX + Fe(2+). Its pathway is porphyrin-containing compound metabolism; protoheme biosynthesis; protoheme from protoporphyrin-IX: step 1/1. Functionally, catalyzes the ferrous insertion into protoporphyrin IX. The sequence is that of Ferrochelatase from Nitratiruptor sp. (strain SB155-2).